A 239-amino-acid polypeptide reads, in one-letter code: MDYLGIDLSCAIGSLRNGEFPAKDCLLPLISKLLGYFLVAASMTVKLPQIMKIVDNKSVKGLSVVAFELEVIGYTISLAYCLNKDLPFSAFGELAFLLIQALILVACIYYFSQPLSVTTWVKAILYFAIAPTVFAGKIDPFLFEALYASKHLIFLSARIPQIWKNFRNKSTGQLSFLTCLMNFGGALARVFTSIQEKAPLSMLLGIVLSIFTNGIIMSQILLYRSKGNEDKLVKSKKIS.

The next 6 membrane-spanning stretches (helical) occupy residues 25 to 45 (CLLP…SMTV), 62 to 82 (LSVV…AYCL), 91 to 111 (FGEL…IYYF), 123 to 143 (AILY…PFLF), 174 to 194 (LSFL…FTSI), and 202 to 222 (MLLG…QILL). A PQ-loop 1 domain is found at 27–93 (LPLISKLLGY…KDLPFSAFGE (67 aa)). Residues 150–205 (KHLIFLSARIPQIWKNFRNKSTGQLSFLTCLMNFGGALARVFTSIQEKAPLSMLLG) enclose the PQ-loop 2 domain.

The protein belongs to the MPDU1 (TC 2.A.43.3) family.

It localises to the membrane. This is Mannose-P-dolichol utilization defect 1 protein homolog 1 from Arabidopsis thaliana (Mouse-ear cress).